A 217-amino-acid chain; its full sequence is Octanoyltransferase (217 aa).

The 176-residue stretch at 32-207 (SDSPDELWIV…TLSQLLGYQQ (176 aa)) folds into the BPL/LPL catalytic domain. Substrate contacts are provided by residues 71–78 (RGGQVTYH), 138–140 (SLG), and 151–153 (GLA). Cysteine 169 serves as the catalytic Acyl-thioester intermediate.

This sequence belongs to the LipB family.

Its subcellular location is the cytoplasm. It carries out the reaction octanoyl-[ACP] + L-lysyl-[protein] = N(6)-octanoyl-L-lysyl-[protein] + holo-[ACP] + H(+). It participates in protein modification; protein lipoylation via endogenous pathway; protein N(6)-(lipoyl)lysine from octanoyl-[acyl-carrier-protein]: step 1/2. Functionally, catalyzes the transfer of endogenously produced octanoic acid from octanoyl-acyl-carrier-protein onto the lipoyl domains of lipoate-dependent enzymes. Lipoyl-ACP can also act as a substrate although octanoyl-ACP is likely to be the physiological substrate. This Shewanella sp. (strain ANA-3) protein is Octanoyltransferase.